Consider the following 406-residue polypeptide: MSRTLHLAEQLISRPSVTPDDAGCQALLIARLAPLGFKCETIVSGPEHFRVTNLWAKFEGFSPSAQAALAQPAIESIANTELSQAKVKTLVFAGHTDVVPTGPLAQWHSHPFTPSHRAGKLYGRGTADMKTSIAAMVVAVEEFLAAHPRPALSMAFLITSDEEGPGIDGTVVVCDRLLARGEVLDYCIVGEPTSVKQLGDMIKNGRRGTLSGKLSVKGVQGHIAYPHLAKNPIHLFAPALAELVATQWDQGNDFFPATSWQVSNIHAGTGASNVIPGDLVVDFNFRFCTESTPESLQQRLLAILSKHQFEYELKWTLGGLPFLTTPGTLVDAVRGAILAETGVQTELSTTGGTSDGRFIAKICPQVIELGPVNATIHQINECVDTASLDPLKNIYKGVLERLAGLA.

Histidine 95 contributes to the Zn(2+) binding site. Aspartate 97 is an active-site residue. Aspartate 128 is a binding site for Zn(2+). Glutamate 162 serves as the catalytic Proton acceptor. The Zn(2+) site is built by glutamate 163, glutamate 191, and histidine 377.

It belongs to the peptidase M20A family. DapE subfamily. In terms of assembly, homodimer. Requires Zn(2+) as cofactor. Co(2+) is required as a cofactor.

It catalyses the reaction N-succinyl-(2S,6S)-2,6-diaminopimelate + H2O = (2S,6S)-2,6-diaminopimelate + succinate. It functions in the pathway amino-acid biosynthesis; L-lysine biosynthesis via DAP pathway; LL-2,6-diaminopimelate from (S)-tetrahydrodipicolinate (succinylase route): step 3/3. In terms of biological role, catalyzes the hydrolysis of N-succinyl-L,L-diaminopimelic acid (SDAP), forming succinate and LL-2,6-diaminopimelate (DAP), an intermediate involved in the bacterial biosynthesis of lysine and meso-diaminopimelic acid, an essential component of bacterial cell walls. The sequence is that of Succinyl-diaminopimelate desuccinylase from Polaromonas naphthalenivorans (strain CJ2).